Here is a 534-residue protein sequence, read N- to C-terminus: Protoheme IX farnesyltransferase (534 aa).

The segment at 1–251 is unknown; that stretch reads MRREHARAIL…VLLEGKPSLL (251 aa). The next 15 helical transmembrane spans lie at 17-37, 39-59, 83-103, 128-148, 163-183, 197-217, 261-281, 284-304, 339-359, 360-380, 384-404, 411-431, 457-477, 479-499, and 508-528; these read PWLLIVLALIAYGAVLAGGIV, ALTGAAVSGIAMFTLGAALAI, YLTLAFAATGVLYLAVIFGAI, LALAHRGLAGGATLLIAALAV, VAWALGLMLIQNLVGLAQVLL, LMHLGLSATAWGALVVLTTLA, GVISLLILTTITSMYITPAGI, LSLVLWTTLGGWLMASGSHSI, IALGVVAFVILALFVNLLAAI, LALAGFLYYVFIYTIWLKRTS, IVIGGGAGAFPPLVGWAAVTG, LLLWLIVFFWTPPHFWALALI, IVIYTLSMLALTALPPVLGML, WAYLMSAAVSGGLFLHYALKL, and AWALYKYSLLYLAILFVAMAV. Residues 252 to 530 form a protoheme IX prenyltransferase region; sequence KDYISLTKPG…ILFVAMAVDR (279 aa).

It in the C-terminal section; belongs to the UbiA prenyltransferase family. Protoheme IX farnesyltransferase subfamily.

The protein localises to the cell membrane. The enzyme catalyses heme b + (2E,6E)-farnesyl diphosphate + H2O = Fe(II)-heme o + diphosphate. It participates in porphyrin-containing compound metabolism; heme O biosynthesis; heme O from protoheme: step 1/1. Its function is as follows. Converts heme B (protoheme IX) to heme O by substitution of the vinyl group on carbon 2 of heme B porphyrin ring with a hydroxyethyl farnesyl side group. The chain is Protoheme IX farnesyltransferase (ctaB) from Roseiflexus sp. (strain RS-1).